The sequence spans 486 residues: Malonate-semialdehyde dehydrogenase (486 aa).

Positions 154, 178, 181, 182, and 231 each coordinate NAD(+). C286 functions as the Nucleophile in the catalytic mechanism. E386 lines the NAD(+) pocket.

The protein belongs to the aldehyde dehydrogenase family. IolA subfamily. In terms of assembly, homotetramer.

It carries out the reaction 3-oxopropanoate + NAD(+) + CoA + H2O = hydrogencarbonate + acetyl-CoA + NADH + H(+). The catalysed reaction is 2-methyl-3-oxopropanoate + NAD(+) + CoA + H2O = propanoyl-CoA + hydrogencarbonate + NADH + H(+). It functions in the pathway polyol metabolism; myo-inositol degradation into acetyl-CoA; acetyl-CoA from myo-inositol: step 7/7. Functionally, catalyzes the oxidation of malonate semialdehyde (MSA) and methylmalonate semialdehyde (MMSA) into acetyl-CoA and propanoyl-CoA, respectively. Is involved in a myo-inositol catabolic pathway. Bicarbonate, and not CO2, is the end-product of the enzymatic reaction. The sequence is that of Malonate-semialdehyde dehydrogenase from Bacillus cereus (strain G9842).